The primary structure comprises 488 residues: ATP synthase subunit beta (488 aa).

ATP is bound at residue 164–171 (GGAGVGKT).

This sequence belongs to the ATPase alpha/beta chains family. In terms of assembly, F-type ATPases have 2 components, CF(1) - the catalytic core - and CF(0) - the membrane proton channel. CF(1) has five subunits: alpha(3), beta(3), gamma(1), delta(1), epsilon(1). CF(0) has four main subunits: a(1), b(1), b'(1) and c(9-12).

The protein localises to the cellular thylakoid membrane. It catalyses the reaction ATP + H2O + 4 H(+)(in) = ADP + phosphate + 5 H(+)(out). Produces ATP from ADP in the presence of a proton gradient across the membrane. The catalytic sites are hosted primarily by the beta subunits. In Prochlorococcus marinus (strain MIT 9211), this protein is ATP synthase subunit beta.